A 273-amino-acid chain; its full sequence is Aspartate/glutamate leucyltransferase (273 aa).

This sequence belongs to the R-transferase family. Bpt subfamily.

It localises to the cytoplasm. The enzyme catalyses N-terminal L-glutamyl-[protein] + L-leucyl-tRNA(Leu) = N-terminal L-leucyl-L-glutamyl-[protein] + tRNA(Leu) + H(+). The catalysed reaction is N-terminal L-aspartyl-[protein] + L-leucyl-tRNA(Leu) = N-terminal L-leucyl-L-aspartyl-[protein] + tRNA(Leu) + H(+). Functionally, functions in the N-end rule pathway of protein degradation where it conjugates Leu from its aminoacyl-tRNA to the N-termini of proteins containing an N-terminal aspartate or glutamate. In Ruegeria pomeroyi (strain ATCC 700808 / DSM 15171 / DSS-3) (Silicibacter pomeroyi), this protein is Aspartate/glutamate leucyltransferase.